The primary structure comprises 347 residues: NADH-ubiquinone oxidoreductase chain 2 (347 aa).

Transmembrane regions (helical) follow at residues 2 to 22, 25 to 45, 56 to 76, 96 to 116, 122 to 142, 149 to 169, 178 to 197, 202 to 219, 241 to 261, 278 to 298, and 323 to 343; these read SPYVLTIMSLSLLLGTTMTLI, HWLTAWMGLEINTLAVIPLMT, AIKYFMIQATASMIILFSAIF, FMMTIALAMKLGLAPFHFWVP, IPLLSGMILLTWQKIAPISIF, LNMSLLMILSITSTLLGGWGG, ILAYSSIAHMGWMTIIIMIY, ILNLILYLASTITMFMVL, MIIITLTLLSLGGLPPLTGFM, LAMMLALSTLLNLFFYMRIIY, and ILPIPTLTIISSLLLPMTPMF.

The protein belongs to the complex I subunit 2 family. As to quaternary structure, core subunit of respiratory chain NADH dehydrogenase (Complex I) which is composed of 45 different subunits. Interacts with TMEM242.

It is found in the mitochondrion inner membrane. The catalysed reaction is a ubiquinone + NADH + 5 H(+)(in) = a ubiquinol + NAD(+) + 4 H(+)(out). Its function is as follows. Core subunit of the mitochondrial membrane respiratory chain NADH dehydrogenase (Complex I) which catalyzes electron transfer from NADH through the respiratory chain, using ubiquinone as an electron acceptor. Essential for the catalytic activity and assembly of complex I. This is NADH-ubiquinone oxidoreductase chain 2 from Metachirus nudicaudatus (Brown four-eyed opossum).